The sequence spans 1325 residues: ATP-binding cassette sub-family C member 4 (1325 aa).

The next 6 helical transmembrane spans lie at 93–113 (LILG…PLFL), 136–156 (GYAA…HLYF), 205–225 (FDQV…AIAV), 227–247 (VLLW…LVIL), 322–342 (ASFF…YVLL), and 351–371 (VFVA…FFPS). Residues 93-377 (LILGIFTLIE…FFPSAIERGS (285 aa)) enclose the ABC transmembrane type-1 1 domain. The ABC transporter 1 domain occupies 410–633 (VHVQDFTAFW…GVDFGSLLKK (224 aa)). 445 to 452 (GPVGAGKS) is an ATP binding site. Residues T646 and T648 each carry the phosphothreonine modification. Residues 657–667 (ASIWSQQSSRP) are compositionally biased toward polar residues. The segment at 657–690 (ASIWSQQSSRPSLKDGAPEGQDAENTQAVQPEES) is disordered. S664 and S668 each carry phosphoserine. 5 helical membrane passes run 710 to 730 (SWFF…FYVL), 761 to 781 (LSWY…FGIA), 849 to 869 (LVVS…IPLV), 954 to 974 (AICA…AKTL), and 977 to 997 (GQVG…QWSV). Positions 714-1005 (IIFLVLLNMV…SVRQSAEVEN (292 aa)) constitute an ABC transmembrane type-1 2 domain. An ABC transporter 2 domain is found at 1041-1274 (IVFDNVNFTY…PESLFYKMVQ (234 aa)). 1075-1082 (GRTGAGKS) contacts ATP. A PDZ-binding motif is present at residues 1322–1325 (ETAL).

As to quaternary structure, interacts (via PDZ-binding motif) with SNX27 (via PDZ domain); this interaction accelerates MRP4 internalization. It depends on Mg(2+) as a cofactor. N-glycosylated; leading to substrate-selective effects on its transport activity.

It localises to the basolateral cell membrane. It is found in the apical cell membrane. The enzyme catalyses ATP + H2O + xenobioticSide 1 = ADP + phosphate + xenobioticSide 2.. It carries out the reaction an S-substituted glutathione(in) + ATP + H2O = an S-substituted glutathione(out) + ADP + phosphate + H(+). The catalysed reaction is 17beta-estradiol 17-O-(beta-D-glucuronate)(in) + ATP + H2O = 17beta-estradiol 17-O-(beta-D-glucuronate)(out) + ADP + phosphate + H(+). It catalyses the reaction dehydroepiandrosterone 3-sulfate(in) + ATP + H2O = dehydroepiandrosterone 3-sulfate(out) + ADP + phosphate + H(+). The enzyme catalyses leukotriene C4(in) + ATP + H2O = leukotriene C4(out) + ADP + phosphate + H(+). It carries out the reaction leukotriene B4(in) + ATP + H2O = leukotriene B4(out) + ADP + phosphate + H(+). The catalysed reaction is urate(in) + ATP + H2O = urate(out) + ADP + phosphate + H(+). It catalyses the reaction 3',5'-cyclic GMP(in) + ATP + H2O = 3',5'-cyclic GMP(out) + ADP + phosphate + H(+). The enzyme catalyses 3',5'-cyclic AMP(in) + ATP + H2O = 3',5'-cyclic AMP(out) + ADP + phosphate + H(+). It carries out the reaction prostaglandin E2(in) + ATP + H2O = prostaglandin E2(out) + ADP + phosphate + H(+). The catalysed reaction is prostaglandin E1(in) + ATP + H2O = prostaglandin E1(out) + ADP + phosphate + H(+). It catalyses the reaction glycodeoxycholate(in) + glutathione(in) + ATP + H2O = glycodeoxycholate(out) + glutathione(out) + ADP + phosphate + H(+). The enzyme catalyses cholate(in) + glutathione(in) + ATP + H2O = cholate(out) + glutathione(out) + ADP + phosphate + H(+). It carries out the reaction glycocholate(in) + glutathione(in) + ATP + H2O = glycocholate(out) + glutathione(out) + ADP + phosphate + H(+). The catalysed reaction is taurocholate(in) + glutathione(in) + ATP + H2O = taurocholate(out) + glutathione(out) + ADP + phosphate + H(+). It catalyses the reaction glycochenodeoxycholate(in) + glutathione(in) + ATP + H2O = glycochenodeoxycholate(out) + glutathione(out) + ADP + phosphate + H(+). The enzyme catalyses taurochenodeoxycholate(in) + glutathione(in) + ATP + H2O = taurochenodeoxycholate(out) + glutathione(out) + ADP + phosphate + H(+). It carries out the reaction glycoursodeoxycholate(in) + glutathione(in) + ATP + H2O = glycoursodeoxycholate(out) + glutathione(out) + ADP + phosphate + H(+). The catalysed reaction is tauroursodeoxycholate(in) + glutathione(in) + ATP + H2O = tauroursodeoxycholate(out) + glutathione(out) + ADP + phosphate + H(+). Functionally, ATP-dependent transporter of the ATP-binding cassette (ABC) family that actively extrudes physiological compounds and xenobiotics from cells. Transports a range of endogenous molecules that have a key role in cellular communication and signaling, including cyclic nucleotides such as cyclic AMP (cAMP) and cyclic GMP (cGMP), bile acids, steroid conjugates, urate, and prostaglandins. Also mediates the ATP-dependent efflux of glutathione conjugates such as leukotriene C4 (LTC4) and leukotriene B4 (LTB4). The presence of GSH is necessary for the ATP-dependent transport of LTB4, whereas GSH is not required for the transport of LTC4. Mediates the cotransport of bile acids with reduced glutathione (GSH). Transports a wide range of drugs and their metabolites, including anticancer, antiviral and antibiotics molecules. Confers resistance to anticancer agents. The polypeptide is ATP-binding cassette sub-family C member 4 (Mus musculus (Mouse)).